The sequence spans 453 residues: Kynurenine 3-monooxygenase (453 aa).

This sequence belongs to the aromatic-ring hydroxylase family. KMO subfamily. FAD serves as cofactor.

It carries out the reaction L-kynurenine + NADPH + O2 + H(+) = 3-hydroxy-L-kynurenine + NADP(+) + H2O. It participates in cofactor biosynthesis; NAD(+) biosynthesis; quinolinate from L-kynurenine: step 1/3. Its function is as follows. Catalyzes the hydroxylation of L-kynurenine (L-Kyn) to form 3-hydroxy-L-kynurenine (L-3OHKyn). Required for synthesis of quinolinic acid. This chain is Kynurenine 3-monooxygenase, found in Salinispora tropica (strain ATCC BAA-916 / DSM 44818 / JCM 13857 / NBRC 105044 / CNB-440).